Reading from the N-terminus, the 438-residue chain is UDP-N-acetylmuramoylalanine--D-glutamate ligase (438 aa).

Position 112-118 (112-118) interacts with ATP; the sequence is GSNGKST.

Belongs to the MurCDEF family.

It is found in the cytoplasm. It catalyses the reaction UDP-N-acetyl-alpha-D-muramoyl-L-alanine + D-glutamate + ATP = UDP-N-acetyl-alpha-D-muramoyl-L-alanyl-D-glutamate + ADP + phosphate + H(+). It functions in the pathway cell wall biogenesis; peptidoglycan biosynthesis. Its function is as follows. Cell wall formation. Catalyzes the addition of glutamate to the nucleotide precursor UDP-N-acetylmuramoyl-L-alanine (UMA). This Escherichia coli O6:H1 (strain CFT073 / ATCC 700928 / UPEC) protein is UDP-N-acetylmuramoylalanine--D-glutamate ligase (murD).